The sequence spans 313 residues: Porphobilinogen deaminase (313 aa).

Cysteine 242 carries the post-translational modification S-(dipyrrolylmethanemethyl)cysteine.

It belongs to the HMBS family. Monomer. Dipyrromethane is required as a cofactor.

It carries out the reaction 4 porphobilinogen + H2O = hydroxymethylbilane + 4 NH4(+). Its pathway is porphyrin-containing compound metabolism; protoporphyrin-IX biosynthesis; coproporphyrinogen-III from 5-aminolevulinate: step 2/4. Its function is as follows. Tetrapolymerization of the monopyrrole PBG into the hydroxymethylbilane pre-uroporphyrinogen in several discrete steps. This chain is Porphobilinogen deaminase, found in Pectobacterium carotovorum subsp. carotovorum (strain PC1).